Here is a 372-residue protein sequence, read N- to C-terminus: Glutamate 5-kinase (372 aa).

K14 provides a ligand contact to ATP. Positions 54, 141, and 153 each coordinate substrate. 173–174 (TD) contacts ATP. Residues 280–358 (RGTLVLDDGA…DAIEALLGYV (79 aa)) enclose the PUA domain.

It belongs to the glutamate 5-kinase family.

The protein localises to the cytoplasm. It catalyses the reaction L-glutamate + ATP = L-glutamyl 5-phosphate + ADP. It functions in the pathway amino-acid biosynthesis; L-proline biosynthesis; L-glutamate 5-semialdehyde from L-glutamate: step 1/2. Its function is as follows. Catalyzes the transfer of a phosphate group to glutamate to form L-glutamate 5-phosphate. The polypeptide is Glutamate 5-kinase (Pseudomonas paraeruginosa (strain DSM 24068 / PA7) (Pseudomonas aeruginosa (strain PA7))).